A 235-amino-acid chain; its full sequence is tRNA (guanine-N(1)-)-methyltransferase (235 aa).

Residues G112 and 132 to 137 contribute to the S-adenosyl-L-methionine site; that span reads IGDYVL.

Belongs to the RNA methyltransferase TrmD family. In terms of assembly, homodimer.

The protein localises to the cytoplasm. It carries out the reaction guanosine(37) in tRNA + S-adenosyl-L-methionine = N(1)-methylguanosine(37) in tRNA + S-adenosyl-L-homocysteine + H(+). Specifically methylates guanosine-37 in various tRNAs. This chain is tRNA (guanine-N(1)-)-methyltransferase, found in Cytophaga hutchinsonii (strain ATCC 33406 / DSM 1761 / CIP 103989 / NBRC 15051 / NCIMB 9469 / D465).